Reading from the N-terminus, the 444-residue chain is F-box protein At1g53790 (444 aa).

One can recognise an F-box domain in the interval 76 to 125 (VSCFRYIPIDLLMDIFSRVPAKSIARFRCVSKLWESILCRPDFKELFMTM).

This Arabidopsis thaliana (Mouse-ear cress) protein is F-box protein At1g53790.